Here is a 577-residue protein sequence, read N- to C-terminus: MAKGSWFFIILFIISMLENMINSLELDRHSFPDDFIFGTAASAFQYEGATSEGGKSPTIWDHFSLTYPERTKMHNADVAIDFYHRYKDDIKLMKELNMDAFRFSISWSRLIPSGKLKDGVNKEGVQFYKDLIDELLANDIQPSMTLYHWDHPQSLEDEYGGFLSPKIVEDFRDFARICFEEFGDKVKMWTTINEPYIMTVAGYDQGNKAAGRCSKWVNEKCQAGDSSTEPYIVSHHTLLAHAAAVEEFRKCEKTSHDGQIGIVLSPRWFEPYHSDSTDDKEAAERALAFEIGWHLDPVIHGDYPEIVKKYAGNKLPSFTVEQSKMLQNSSDFVGINYYTARFAAHLPHIDPEKPRFKTDHHVEWKLTNHSGHIIGPGEERGFLFSHPEGLRKVLNYIKERYNNMPVYIKENGINDNDDGTKPREEIVKDTFRIEYHKTHFEELHKAIVEDGCDVRGYYAWSLMDNFEWEHGYTARFGLYYVDFVNGLKRYPKDSVKWFKRFLKKSVVGESNKEEVEEMSRAEGNKTFKGFEESAGFFASFMAMNQSRRDEENNRCSFDFPHTHFGVLQGIENPSSFY.

An N-terminal signal peptide occupies residues 1 to 23; it reads MAKGSWFFIILFIISMLENMINS. A beta-D-glucoside-binding positions include glutamine 45, histidine 148, and 193–194; that span reads NE. Residue glutamate 194 is the Proton donor of the active site. Cysteines 213 and 221 form a disulfide. N-linked (GlcNAc...) asparagine glycosylation is present at asparagine 328. Tyrosine 338 provides a ligand contact to a beta-D-glucoside. The N-linked (GlcNAc...) asparagine glycan is linked to asparagine 368. Residues glutamate 410, tryptophan 460, 467 to 468, and phenylalanine 476 contribute to the a beta-D-glucoside site; that span reads EW. Glutamate 410 serves as the catalytic Nucleophile. N-linked (GlcNAc...) asparagine glycans are attached at residues asparagine 524 and asparagine 544.

It belongs to the glycosyl hydrolase 1 family.

It carries out the reaction Hydrolysis of terminal, non-reducing beta-D-glucosyl residues with release of beta-D-glucose.. In Arabidopsis thaliana (Mouse-ear cress), this protein is Beta-glucosidase 30.